The primary structure comprises 281 residues: Deoxyribonuclease-1 (281 aa).

The signal sequence occupies residues 1-21; it reads MRSEMLTALLTLAVLLQVAGS. N39 is a glycosylation site (N-linked (GlcNAc...) asparagine). E99 is an active-site residue. A disulfide bond links C122 and C125. H155 is an active-site residue.

This sequence belongs to the DNase I family. Requires Ca(2+) as cofactor. Mg(2+) serves as cofactor. In terms of tissue distribution, equivalent levels in pancreas and parotid gland, low amounts in kidney, liver, small intestine, stomach and thymus.

The protein resides in the secreted. The protein localises to the zymogen granule. It localises to the nucleus envelope. The catalysed reaction is Endonucleolytic cleavage to 5'-phosphodinucleotide and 5'-phosphooligonucleotide end-products.. Serum endocuclease secreted into body fluids by a wide variety of exocrine and endocrine organs. Expressed by non-hematopoietic tissues and preferentially cleaves protein-free DNA. Among other functions, seems to be involved in cell death by apoptosis. Binds specifically to G-actin and blocks actin polymerization. Preferentially attacks double-stranded DNA and produces oligonucleotides with 5'-phospho and 3'-hydroxy termini. Together with DNASE1L3, plays a key role in degrading neutrophil extracellular traps (NETs). NETs are mainly composed of DNA fibers and are released by neutrophils to bind pathogens during inflammation. Degradation of intravascular NETs by DNASE1 and DNASE1L3 is required to prevent formation of clots that obstruct blood vessels and cause organ damage following inflammation. The chain is Deoxyribonuclease-1 (DNASE1) from Oryctolagus cuniculus (Rabbit).